The following is a 326-amino-acid chain: Transcription cofactor vestigial-like protein 3 (326 aa).

The interval Ser54–Ala82 is disordered. A Glycyl lysine isopeptide (Lys-Gly) (interchain with G-Cter in SUMO2) cross-link involves residue Lys62. A compositionally biased stretch (acidic residues) spans Glu64–Lys78. Residue Lys129 forms a Glycyl lysine isopeptide (Lys-Gly) (interchain with G-Cter in SUMO2) linkage. The interval Thr184–Glu208 is disordered.

Belongs to the vestigial family.

The protein localises to the nucleus. Functionally, may act as a specific coactivator for the mammalian TEFs. In Mus musculus (Mouse), this protein is Transcription cofactor vestigial-like protein 3.